A 692-amino-acid polypeptide reads, in one-letter code: Proprotein convertase subtilisin/kexin type 9 (692 aa).

An N-terminal signal peptide occupies residues 1–30 (MGTVSSRRSWWPLPLLLLLLLLLGPAGARA). A propeptide spanning residues 31–152 (QEDEDGDYEE…IEEDSSVFAQ (122 aa)) is cleaved from the precursor. Position 38 is a sulfotyrosine (Tyr-38). The residue at position 47 (Ser-47) is a Phosphoserine. Residues 77–149 (TYVVVLKEET…VDYIEEDSSV (73 aa)) enclose the Inhibitor I9 domain. In terms of domain architecture, Peptidase S8 spans 155–461 (PWNLERITPP…GWQLFCRTVW (307 aa)). Residues Asp-186 and His-226 each act as charge relay system in the active site. Intrachain disulfides connect Cys-223-Cys-255 and Cys-323-Cys-358. Ser-386 (charge relay system) is an active-site residue. The tract at residues 450 to 692 (GAGWQLFCRT…HLAQASQELQ (243 aa)) is C-terminal domain. Intrachain disulfides connect Cys-457–Cys-527, Cys-477–Cys-526, and Cys-486–Cys-509. Residue Asn-533 is glycosylated (N-linked (GlcNAc...) asparagine). Cystine bridges form between Cys-534/Cys-601, Cys-552/Cys-600, Cys-562/Cys-588, Cys-608/Cys-679, Cys-626/Cys-678, and Cys-635/Cys-654. Ser-688 bears the Phosphoserine mark.

It belongs to the peptidase S8 family. As to quaternary structure, monomer. Can self-associate to form dimers and higher multimers which may have increased LDLR degrading activity. The precursor protein but not the mature protein may form multimers. Interacts with APOB, VLDLR, LRP8/APOER2 and BACE1. The full-length immature form (pro-PCSK9) interacts with SCNN1A, SCNN1B and SCNN1G. The pro-PCSK9 form (via C-terminal domain) interacts with LDLR. Interacts (via the C-terminal domain) with ANXA2 (via repeat Annexin 1); the interaction inhibits the degradation of LDLR. It depends on Ca(2+) as a cofactor. Cleavage by furin and PCSK5 generates a truncated inactive protein that is unable to induce LDLR degradation. Post-translationally, undergoes autocatalytic cleavage in the endoplasmic reticulum to release the propeptide from the N-terminus and the cleavage of the propeptide is strictly required for its maturation and activation. The cleaved propeptide however remains associated with the catalytic domain through non-covalent interactions, preventing potential substrates from accessing its active site. As a result, it is secreted from cells as a propeptide-containing, enzymatically inactive protein. In terms of processing, phosphorylation protects the propeptide against proteolysis.

It localises to the cytoplasm. The protein resides in the secreted. Its subcellular location is the endosome. It is found in the lysosome. The protein localises to the cell surface. It localises to the endoplasmic reticulum. The protein resides in the golgi apparatus. Its proteolytic activity is autoinhibited by the non-covalent binding of the propeptide to the catalytic domain. Inhibited by EGTA. Functionally, crucial player in the regulation of plasma cholesterol homeostasis. Binds to low-density lipid receptor family members: low density lipoprotein receptor (LDLR), very low density lipoprotein receptor (VLDLR), apolipoprotein E receptor (LRP1/APOER) and apolipoprotein receptor 2 (LRP8/APOER2), and promotes their degradation in intracellular acidic compartments. Acts via a non-proteolytic mechanism to enhance the degradation of the hepatic LDLR through a clathrin LDLRAP1/ARH-mediated pathway. May prevent the recycling of LDLR from endosomes to the cell surface or direct it to lysosomes for degradation. Can induce ubiquitination of LDLR leading to its subsequent degradation. Inhibits intracellular degradation of APOB via the autophagosome/lysosome pathway in a LDLR-independent manner. Involved in the disposal of non-acetylated intermediates of BACE1 in the early secretory pathway. Inhibits epithelial Na(+) channel (ENaC)-mediated Na(+) absorption by reducing ENaC surface expression primarily by increasing its proteasomal degradation. Regulates neuronal apoptosis via modulation of LRP8/APOER2 levels and related anti-apoptotic signaling pathways. The chain is Proprotein convertase subtilisin/kexin type 9 (PCSK9) from Pan paniscus (Pygmy chimpanzee).